Consider the following 142-residue polypeptide: Organic hydroperoxide resistance protein-like 2 (142 aa).

Belongs to the OsmC/Ohr family.

This Staphylococcus saprophyticus subsp. saprophyticus (strain ATCC 15305 / DSM 20229 / NCIMB 8711 / NCTC 7292 / S-41) protein is Organic hydroperoxide resistance protein-like 2.